Reading from the N-terminus, the 86-residue chain is Class II hydrophobin 2 (86 aa).

Positions 1 to 15 are cleaved as a signal peptide; the sequence is MQFFAVALFATSALA. 4 cysteine pairs are disulfide-bonded: Cys-18–Cys-67, Cys-28–Cys-58, Cys-29–Cys-41, and Cys-68–Cys-79.

Belongs to the cerato-ulmin hydrophobin family. As to quaternary structure, homodimer. Homodimers further self-assemble to form highly ordered films at water-air interfaces through intermolecular interactions.

The protein resides in the secreted. The protein localises to the spore wall. It localises to the cell wall. Aerial growth, conidiation, and dispersal of filamentous fungi in the environment rely upon a capability of their secreting small amphipathic proteins called hydrophobins (HPBs) with low sequence identity. Class I can self-assemble into an outermost layer of rodlet bundles on aerial cell surfaces, conferring cellular hydrophobicity that supports fungal growth, development and dispersal; whereas Class II form highly ordered films at water-air interfaces through intermolecular interactions but contribute nothing to the rodlet structure. Hbf2 is a class II hydrophobin that is involved in sporuration. In Hypocrea jecorina (Trichoderma reesei), this protein is Class II hydrophobin 2.